The sequence spans 136 residues: MSKAQAVGSNYRVSLGLPVGAVMNSADNSGAKNLYVIAVKGIKGRLNRLPSAGVGDMVMATVKKGKPELRKKVCTGLVVRQRKHWKRKDGVYIYFEDNAGVMCNPKGEVKGNILGPVAKECSDLWPKVATNAGTIV.

Belongs to the universal ribosomal protein uL14 family.

The sequence is that of Large ribosomal subunit protein uL14 (rpl23) from Dictyostelium discoideum (Social amoeba).